The sequence spans 150 residues: uncharacterized protein (150 aa).

In terms of domain architecture, HTH asnC-type spans 5–66 (LDKVDRRLLE…KPNYKKLNLG (62 aa)). Positions 24–43 (IATLSKKLGIPRTTVHYRIK) form a DNA-binding region, H-T-H motif.

This is an uncharacterized protein from Pyrococcus horikoshii (strain ATCC 700860 / DSM 12428 / JCM 9974 / NBRC 100139 / OT-3).